The sequence spans 288 residues: Light-independent protochlorophyllide reductase iron-sulfur ATP-binding protein (288 aa).

ATP-binding positions include glycine 10–threonine 15 and lysine 39. Serine 14 is a binding site for Mg(2+). Cysteine 95 and cysteine 129 together coordinate [4Fe-4S] cluster. Residues asparagine 180 to arginine 181 and proline 204 to leucine 206 contribute to the ATP site.

This sequence belongs to the NifH/BchL/ChlL family. Homodimer. Protochlorophyllide reductase is composed of three subunits; ChlL, ChlN and ChlB. [4Fe-4S] cluster serves as cofactor.

It localises to the plastid. The protein localises to the chloroplast. The enzyme catalyses chlorophyllide a + oxidized 2[4Fe-4S]-[ferredoxin] + 2 ADP + 2 phosphate = protochlorophyllide a + reduced 2[4Fe-4S]-[ferredoxin] + 2 ATP + 2 H2O. It functions in the pathway porphyrin-containing compound metabolism; chlorophyll biosynthesis (light-independent). In terms of biological role, component of the dark-operative protochlorophyllide reductase (DPOR) that uses Mg-ATP and reduced ferredoxin to reduce ring D of protochlorophyllide (Pchlide) to form chlorophyllide a (Chlide). This reaction is light-independent. The L component serves as a unique electron donor to the NB-component of the complex, and binds Mg-ATP. The polypeptide is Light-independent protochlorophyllide reductase iron-sulfur ATP-binding protein (Stigeoclonium helveticum (Green alga)).